The following is a 315-amino-acid chain: MYDWLNALPKAELHLHLEGSLEPELLFALAERNKIELPWADVETLRAAYAFNNLQEFLDLYYQGANVLRSEQDFYDLTWAYLQRCKAQNVVHVEPFFDPQTHTDRGIPFEVVLRGIRQALLDGEKQLGISHGLILSFLRHLPEEEAFKTLEQAMPFRDAFIGVGLDSSEKGFPPRLFERVFAKARSEGLHAVAHAGEEGPPEYIWEALDLLKVERIDHGVRAIEDERLMQRIIDEQIPLTVCPLSNIKLCVFEHMGQHNILDMLERGVKVTVNSDDPAYFGGYVGENFAALHEHLGMSEEQARRLAQNSLDARLA.

3 residues coordinate Zn(2+): histidine 14, histidine 16, and histidine 194. Glutamate 197 serves as the catalytic Proton donor. Aspartate 275 is a binding site for Zn(2+). Substrate is bound at residue aspartate 276.

It belongs to the metallo-dependent hydrolases superfamily. Adenosine and AMP deaminases family. Adenine deaminase type 2 subfamily. Zn(2+) is required as a cofactor.

The enzyme catalyses adenine + H2O + H(+) = hypoxanthine + NH4(+). Catalyzes the hydrolytic deamination of adenine to hypoxanthine. Plays an important role in the purine salvage pathway and in nitrogen catabolism. The polypeptide is Adenine deaminase (Ectopseudomonas mendocina (strain ymp) (Pseudomonas mendocina)).